The sequence spans 369 residues: Nuclear hormone receptor family member nhr-64 (369 aa).

The nuclear receptor DNA-binding region spans 67–142; that stretch reads EKCQVDKAKR…ASTRGLRTTV (76 aa). 2 consecutive NR C4-type zinc fingers follow at residues 70–90 and 106–130; these read QVDK…CLRK and PANP…TLIR. Residues 120 to 352 form the NR LBD domain; that stretch reads PDDPLLDTLI…NLMLELMLPN (233 aa).

Belongs to the nuclear hormone receptor family.

The protein resides in the nucleus. Its function is as follows. Orphan nuclear receptor. This is Nuclear hormone receptor family member nhr-64 (nhr-64) from Caenorhabditis elegans.